Here is a 493-residue protein sequence, read N- to C-terminus: Probable polyol transporter 6 (493 aa).

Helical transmembrane passes span 25 to 45 (SIVSIIFGYDTGVMSGAMVFI), 54 to 74 (VQIEVLTGILNLCALVGSLLA), 85 to 105 (YTIVLASILFMLGSILMGWGP), 116 to 136 (TAGLGVGFALMVAPVYSAEIA), 142 to 162 (GLLASLPHLCISIGILLGYIV), 177 to 197 (LMLGIAAVPSLVLAFGILKMP), 275 to 295 (VLLTALGIHFFQHASGIEAVL), 313 to 333 (LFLVTIGVGIMKTTFIFTATL), 343 to 363 (LLLTSVGGMVIALTMLGFGLT), 372 to 392 (LAWALVLSIVAAYSFVAFFSI), 414 to 434 (GASLGVAVNRVMNATVSMSFL), and 444 to 464 (GAFFMFAGVAAVAWNFFFFLL).

The protein belongs to the major facilitator superfamily. Sugar transporter (TC 2.A.1.1) family.

It is found in the membrane. Functionally, plasma membrane sugar-proton symporter. The polypeptide is Probable polyol transporter 6 (PLT6) (Arabidopsis thaliana (Mouse-ear cress)).